The primary structure comprises 398 residues: Putative F-box protein At3g17620 (398 aa).

Residues 1–45 (MMSDLPRDLLEERLSRVPVKSLREARFTCKNWKTLSKKRSFTKKH) enclose the F-box domain.

In Arabidopsis thaliana (Mouse-ear cress), this protein is Putative F-box protein At3g17620.